Consider the following 143-residue polypeptide: S-adenosylmethionine decarboxylase proenzyme (143 aa).

The active-site Schiff-base intermediate with substrate; via pyruvic acid is the S66. Position 66 is a pyruvic acid (Ser); by autocatalysis (S66). H71 functions as the Proton acceptor; for processing activity in the catalytic mechanism. The active-site Proton donor; for catalytic activity is the C86.

It belongs to the prokaryotic AdoMetDC family. Type 1 subfamily. In terms of assembly, heterotetramer of two alpha and two beta chains arranged as a dimer of alpha/beta heterodimers. Pyruvate serves as cofactor. In terms of processing, is synthesized initially as an inactive proenzyme. Formation of the active enzyme involves a self-maturation process in which the active site pyruvoyl group is generated from an internal serine residue via an autocatalytic post-translational modification. Two non-identical subunits are generated from the proenzyme in this reaction, and the pyruvate is formed at the N-terminus of the alpha chain, which is derived from the carboxyl end of the proenzyme. The post-translation cleavage follows an unusual pathway, termed non-hydrolytic serinolysis, in which the side chain hydroxyl group of the serine supplies its oxygen atom to form the C-terminus of the beta chain, while the remainder of the serine residue undergoes an oxidative deamination to produce ammonia and the pyruvoyl group blocking the N-terminus of the alpha chain.

The catalysed reaction is S-adenosyl-L-methionine + H(+) = S-adenosyl 3-(methylsulfanyl)propylamine + CO2. It participates in amine and polyamine biosynthesis; S-adenosylmethioninamine biosynthesis; S-adenosylmethioninamine from S-adenosyl-L-methionine: step 1/1. Functionally, catalyzes the decarboxylation of S-adenosylmethionine to S-adenosylmethioninamine (dcAdoMet), the propylamine donor required for the synthesis of the polyamines spermine and spermidine from the diamine putrescine. This Thermococcus gammatolerans (strain DSM 15229 / JCM 11827 / EJ3) protein is S-adenosylmethionine decarboxylase proenzyme.